The sequence spans 2269 residues: MVSIINLGKVKPFGLSYIINSNNNNNNNDDDDYNNEIRESESSIPYEYYFCQNPLKSCFNEEQKILLQSENDETDEKGMILVNNSFFEEAQLFWYQNTVVWSSPFTVKKKFTLPLLLSSMIYPKINNAIWSHFPFLKDLSKQQQEQQQQQHHQQSEYTTSSINNDIDDYYKYLCVLHNQGLNIYNSIGNSYQIVLPCKVINIWSSKFGLLLERDSSLDSTLLAGRDRSEIPSIFSILNPLEELKPVLTFSKSNNNNNNNNEALQQEFFSDTNQTIVFSSTDYPILITYSNIENVHIIYQVSHVKPSSNAENDNTNNNNNNNNTNTNISNNQTINNENGTTTTIINNSSIVNTSKPIFNFNNVSVNDQSFDYSNINISSSSPPFSSRNNNNNNNISNNNNTNNNTNNNNTNNSTSMMQQSIQQQQQQQQQQENSSFKFLNEDKSYFFDDESEFIIKSEIIFEEVLKDSTRLKSNTKSKSIFITLDNNQKPLLCIEINSTLFCYNLFIDQKIKSTQSSSSNKNNNNNNDRNEGIEEKLKLEFSFSISSVQSSSPIFIESFYNNNEYTIPKGINQPFIPLPTHILVLNDHLLSVYWGPFKILDLPIDNNSNNNNNNNNNNNNNNNNNNNNNNNNNNNNNNNNKRKPLYIKDSTFNRVTIVYSDKEEIRFKITLGKSYLVSSCLGALSSFIPMNLLASIYQDFNDFHKFRINNLLNSNSNNNNNNNNSEEENDKEWISFQILLISLLEKSLLKRPTDADTNKKIKENNHIKKEENEDDWEFLLNSNYHKNYEKGLSFLSNLNISDSSKVYPSNNNNNNNNNNNNNNNNNNNNNNNNNNNNNNNNNNNNNNNNNNCNIFIESINDFNFKTSLNSFIESIDDIIIALHHQYEEFKILTFNINYIYKLSKFLIQLSLHLELFNYVDYYFRDFGDLIDFINQFKIKSKTSIDISSLKLQSLLNDDIFSIYKFVYNSFNENNSETQQQQQFNKEKFERNKLTKYHFKWIYKMKSLYSIQSKINDNNSNNKNNIKYISEKLIMKMVELDIKLEDLNSISFGLSLPLRESIKYCRSNPPIDWPLKAYSLIEREELIYKFNIDDVNNVKDGLKINSLLISGGKNKLLSNSTMNHGYNSLSTSITNTLSTASSSSNEMNSNSNITSINGQSNGLPMNSTTNQMNSHQINNNGGGGGGGDDHHHHHSNSTSFDLSKFYHGQDEFYKRITYLRFDTDQRIQEVYRLLSFSNRIQINHTQENGVSDHDYLSQLQSKLLLSVQRSISLPIACGMFTIRSIKPLPTETINIPPIILNGFVGGTKTNISLDPTMVQDNMMVWPEFHNGVAAGLKVSADQTEITNTWIIYNRPKQFNPSYSGLLMALGLQKRLSSLAFTKLFEYLASGHQLTSVGLLLGISCTKMGTMDMSIAKVLSVHIQSLHPPLSIDLDVPSYVQIAALMGIGLLYCQTSNRRMTEVLLMEIGRKPINDKPLDRDSYSLTAGMALGLVNLGKGANEGSLTDLHVEDRLRSFIGISKEDSFDHMSTFFNQSYSTPSISSNRNNNDLFNNGSNNNSSSNGGGGGGGGNNNGNNSNNGNNGSSQFKKSNTILESSKPNIDLTAPGAIIALSLIYLKTNNLKISNYLSIPDTTFGLNYIRPDLVLLRILGRNLILWDSIKPQFQWIIDSVPLVVRKNVTIDRNSEKVFQEHSNNNNNNNKSRSSSSLNDFESFILIFCNVIAGAAFSIGLKYAGSLNENAFSLLMDLIQLFRKRQVYLNKCLLKKKKIEPTFDKVMRVTTETCLNVVALSLSLVMAGSGNLETLKILRMLRSRIGNEITYGNHMAINMAIGFLFLGGGQYTLSTSNIAIASLVCSLYPRFPCSSTDNDYHLQAFRHLYFLAIDPRCLITRDVDTLAPCHVPIELTILNNDTMKLETKQLVTPCLIPELSSIRSISIKSPRYWNIFINRGFVDGGVDININNNNNNNNNNNNNNNNNNNNNNNNNNNNNNNNNNNKNILKNHPTIFLKRKIGHLPYTEDPEGFRSLSKSFPKSESISLYSSSKGFQKNKEEFLKSFISDPNLLAFAKHFCTNQSNEFEHFNTTILYECLTQDTPEVIPLLLLLNDIANNFEKYSNSNTTIVLENLRIIFKFYSKWNNGYYLNNNNNKNNNNDGWLIHSTFLDSISTKIDEHFEKHFLNEQSNKKLLSNYLLTGELPNSLSTSIKRKFASFISYYNLPNNKQFQSFKSLLNNNNNNNSNAIYQLWSSLGNQINFNSINKIIELSTLSFDEDS.

5 disordered regions span residues 305–334 (PSSNAENDNTNNNNNNNNTNTNISNNQTIN), 379–433 (SSPP…QENS), 609–644 (NNNNNNNNNNNNNNNNNNNNNNNNNNNNNNNKRKPL), 804–845 (KVYP…NNNN), and 1136–1197 (STAS…NSTS). Low complexity-rich tracts occupy residues 306–334 (SSNAENDNTNNNNNNNNTNTNISNNQTIN), 379–430 (SSPP…QQQQ), 609–638 (NNNNNNNNNNNNNNNNNNNNNNNNNNNNNN), 809–845 (NNNNNNNNNNNNNNNNNNNNNNNNNNNNNNNNNNNNN), and 1136–1159 (STASSSSNEMNSNSNITSINGQSN). Over residues 1160-1177 (GLPMNSTTNQMNSHQINN) the composition is skewed to polar residues. PC repeat units lie at residues 1440–1472 (AALMGIGLLYCQTSNRRMTEVLLMEIGRKPIND) and 1483–1520 (TAGMALGLVNLGKGANEGSLTDLHVEDRLRSFIGISKE). Residues 1535–1586 (STPSISSNRNNNDLFNNGSNNNSSSNGGGGGGGGNNNGNNSNNGNNGSSQFK) form a disordered region. Residues 1540 to 1559 (SSNRNNNDLFNNGSNNNSSS) show a composition bias toward low complexity. Positions 1560–1570 (NGGGGGGGGNN) are enriched in gly residues. Over residues 1571 to 1583 (NGNNSNNGNNGSS) the composition is skewed to low complexity. 3 PC repeats span residues 1605–1637 (GAIIALSLIYLKTNNLKISNYLSIPDTTFGLNY), 1722–1756 (GAAFSIGLKYAGSLNENAFSLLMDLIQLFRKRQVY), and 1792–1807 (LVMAGSGNLETLKILR). Positions 1960–1993 (NNNNNNNNNNNNNNNNNNNNNNNNNNNNNNNNNN) are enriched in low complexity. Residues 1960–1997 (NNNNNNNNNNNNNNNNNNNNNNNNNNNNNNNNNNKNIL) are disordered.

This sequence belongs to the APC1 family. The APC/C is composed of at least 13 subunits that stay tightly associated throughout the cell cycle: anapc1, anapc2, anapc3, anapc4, anapc5, anapc6, anapc7, anapc8, anapc10, anapc11, cdc20, cdc26 and cdh1.

The protein localises to the nucleus. It participates in protein modification; protein ubiquitination. Component of the anaphase promoting complex/cyclosome (APC/C), a cell cycle-regulated E3 ubiquitin-protein ligase complex that controls progression through mitosis and the G1 phase of the cell cycle. This chain is Anaphase-promoting complex subunit 1 (anapc1), found in Dictyostelium discoideum (Social amoeba).